The chain runs to 324 residues: NADH-quinone oxidoreductase subunit H (324 aa).

Helical transmembrane passes span 11–31, 81–101, 114–134, 154–174, 186–206, 237–257, 265–285, and 304–324; these read ILITVGKAVVILLVVVTCGAF, VIFTLAPMIAFTSMLIAFAIV, IGILFFLMMAGLAVYAVLFAG, VSYEVFIGLSLMGVVAQAGSF, LWNVIPQFFGFITFAIAGVAV, FFVGEYIGIVTVSALMVTLFF, LPPFVWFALKTGFFMMMFILI, and VCLPITLLNLLATAAVILYNA.

The protein belongs to the complex I subunit 1 family. As to quaternary structure, NDH-1 is composed of 13 different subunits. Subunits NuoA, H, J, K, L, M, N constitute the membrane sector of the complex.

It is found in the cell inner membrane. It catalyses the reaction a quinone + NADH + 5 H(+)(in) = a quinol + NAD(+) + 4 H(+)(out). In terms of biological role, NDH-1 shuttles electrons from NADH, via FMN and iron-sulfur (Fe-S) centers, to quinones in the respiratory chain. The immediate electron acceptor for the enzyme in this species is believed to be ubiquinone. Couples the redox reaction to proton translocation (for every two electrons transferred, four hydrogen ions are translocated across the cytoplasmic membrane), and thus conserves the redox energy in a proton gradient. This subunit may bind ubiquinone. The chain is NADH-quinone oxidoreductase subunit H from Pectobacterium atrosepticum (strain SCRI 1043 / ATCC BAA-672) (Erwinia carotovora subsp. atroseptica).